The primary structure comprises 261 residues: Uridine-cytidine kinase 2 (261 aa).

Polar residues predominate over residues 1 to 16 (MAGDSEQTLQNHQQPN). The interval 1 to 24 (MAGDSEQTLQNHQQPNGGEPFLIG) is disordered. At A2 the chain carries N-acetylalanine. 27-35 (GGTASGKSS) contacts ATP. Positions 84, 112, 117, 166, 176, and 184 each coordinate substrate. D213 is a binding site for ATP. The tract at residues 240–261 (GYLNGYTPSRKRQASESSSRPH) is disordered. S254 carries the phosphoserine modification.

The protein belongs to the uridine kinase family. Homotetramer.

The catalysed reaction is uridine + ATP = UMP + ADP + H(+). It carries out the reaction cytidine + ATP = CMP + ADP + H(+). The protein operates within pyrimidine metabolism; CTP biosynthesis via salvage pathway; CTP from cytidine: step 1/3. Its pathway is pyrimidine metabolism; UMP biosynthesis via salvage pathway; UMP from uridine: step 1/1. In terms of biological role, phosphorylates uridine and cytidine to uridine monophosphate and cytidine monophosphate. Does not phosphorylate deoxyribonucleosides or purine ribonucleosides. Can use ATP or GTP as a phosphate donor. The polypeptide is Uridine-cytidine kinase 2 (Uck2) (Mus musculus (Mouse)).